The sequence spans 412 residues: Thyroxine-binding globulin (412 aa).

The first 16 residues, 1–16, serve as a signal peptide directing secretion; sequence MPLFLYMVLLVLGIHC. Asparagine 20, asparagine 35, asparagine 98, asparagine 164, and asparagine 252 each carry an N-linked (GlcNAc...) asparagine glycan. Residues asparagine 292 and lysine 395 each coordinate thyroxine.

Belongs to the serpin family. Expressed by the liver and secreted in plasma.

The protein localises to the secreted. Its function is as follows. Major thyroid hormone transport protein in serum. In Sus scrofa (Pig), this protein is Thyroxine-binding globulin (SERPINA7).